A 393-amino-acid polypeptide reads, in one-letter code: Putative F-box protein At1g55070 (393 aa).

The 46-residue stretch at 29-74 (GEYFDRIPADLVIKILSKLSAKSMAKCRCVCKLLSSIIRQPNYNQL) folds into the F-box domain.

The chain is Putative F-box protein At1g55070 from Arabidopsis thaliana (Mouse-ear cress).